Reading from the N-terminus, the 589-residue chain is ATP-dependent lipid A-core flippase (589 aa).

5 consecutive transmembrane segments (helical) span residues W29 to L49, A68 to I88, V157 to L177, L254 to A274, and L283 to K303. Residues V32–S314 form the ABC transmembrane type-1 domain. One can recognise an ABC transporter domain in the interval I346 to M582. G380–S387 is a binding site for ATP.

It belongs to the ABC transporter superfamily. Lipid exporter (TC 3.A.1.106) family. Homodimer.

The protein localises to the cell inner membrane. It carries out the reaction ATP + H2O + lipid A-core oligosaccharideSide 1 = ADP + phosphate + lipid A-core oligosaccharideSide 2.. In terms of biological role, involved in lipopolysaccharide (LPS) biosynthesis. Translocates lipid A-core from the inner to the outer leaflet of the inner membrane. Transmembrane domains (TMD) form a pore in the inner membrane and the ATP-binding domain (NBD) is responsible for energy generation. This chain is ATP-dependent lipid A-core flippase, found in Xylella fastidiosa (strain 9a5c).